The following is a 637-amino-acid chain: Tumor protein p73 (637 aa).

The tract at residues Met-1–Asp-46 is transactivation. At Thr-27 the chain carries Phosphothreonine. At Tyr-28 the chain carries Phosphotyrosine; by SRC and HCK. The disordered stretch occupies residues Arg-78–Ser-104. Residues Pro-94 to Ser-104 show a composition bias toward polar residues. Position 99 is a phosphotyrosine (Tyr-99). A DNA-binding region spans residues Phe-131–Arg-310. Zn(2+) is bound by residues Cys-194, His-197, Cys-258, and Cys-262. The segment covering Asp-301–Glu-311 has biased composition (basic and acidic residues). The segment at Asp-301 to Asp-351 is disordered. The interaction with HIPK2 stretch occupies residues Lys-345 to Leu-380. The tract at residues Lys-345–Val-386 is oligomerization. The short motif at Pro-483 to Tyr-487 is the PPxY motif element. The region spanning Pro-485 to Gly-551 is the SAM domain. Lys-628 participates in a covalent cross-link: Glycyl lysine isopeptide (Lys-Gly) (interchain with G-Cter in SUMO); in isoform Alpha. Residue Lys-628 forms a Glycyl lysine isopeptide (Lys-Gly) (interchain with G-Cter in SUMO2) linkage.

This sequence belongs to the p53 family. As to quaternary structure, found in a complex with p53/TP53 and CABLES1. The C-terminal oligomerization domain binds to the ABL1 tyrosine kinase SH3 domain. Interacts with HECW2. Isoforms Alpha and Beta interact with HIPK2. Isoform Alpha interacts with RANBP9. Interacts with WWOX. Isoform Beta interacts homotypically and with p53, whereas isoform Alpha does not. Interacts (via SAM domain) with FBXO45 (via B30.2/SPRY domain). Interacts with YAP1 (phosphorylated form). Interacts with HCK (via SH3 domain); this inhibits TP73 activity and degradation. Zn(2+) is required as a cofactor. Post-translationally, isoform Alpha (but not isoform Beta) is sumoylated on Lys-628, which potentiates proteasomal degradation but does not affect transcriptional activity. In terms of processing, polyubiquitinated by RCHY1/PIRH2; leading to its degradation by the proteasome.

It localises to the nucleus. The protein localises to the cytoplasm. Participates in the apoptotic response to DNA damage. May be a tumor suppressor protein. Is an activator of FOXJ1 expression, essential for the positive regulation of lung ciliated cell differentiation. This Chlorocebus aethiops (Green monkey) protein is Tumor protein p73 (TP73).